Reading from the N-terminus, the 125-residue chain is Meiotically up-regulated gene 112 protein (125 aa).

It is found in the golgi apparatus. Functionally, has a role in meiosis. This chain is Meiotically up-regulated gene 112 protein (mug112), found in Schizosaccharomyces pombe (strain 972 / ATCC 24843) (Fission yeast).